The sequence spans 61 residues: Small ribosomal subunit protein uS14B (61 aa).

4 residues coordinate Zn(2+): cysteine 24, cysteine 27, cysteine 40, and cysteine 43.

Belongs to the universal ribosomal protein uS14 family. Zinc-binding uS14 subfamily. Part of the 30S ribosomal subunit. Contacts proteins S3 and S10. Requires Zn(2+) as cofactor.

Functionally, binds 16S rRNA, required for the assembly of 30S particles and may also be responsible for determining the conformation of the 16S rRNA at the A site. The chain is Small ribosomal subunit protein uS14B from Staphylococcus saprophyticus subsp. saprophyticus (strain ATCC 15305 / DSM 20229 / NCIMB 8711 / NCTC 7292 / S-41).